Consider the following 503-residue polypeptide: Maturase K (503 aa).

This sequence belongs to the intron maturase 2 family. MatK subfamily.

The protein localises to the plastid. It localises to the chloroplast. Usually encoded in the trnK tRNA gene intron. Probably assists in splicing its own and other chloroplast group II introns. The sequence is that of Maturase K from Rubus ursinus (California blackberry).